The following is a 425-amino-acid chain: Enolase (425 aa).

Gln163 is a (2R)-2-phosphoglycerate binding site. The Proton donor role is filled by Glu205. Mg(2+)-binding residues include Asp242, Glu285, and Asp312. 4 residues coordinate (2R)-2-phosphoglycerate: Lys337, Arg366, Ser367, and Lys388. Lys337 acts as the Proton acceptor in catalysis.

It belongs to the enolase family. Requires Mg(2+) as cofactor.

It is found in the cytoplasm. The protein localises to the secreted. The protein resides in the cell surface. The catalysed reaction is (2R)-2-phosphoglycerate = phosphoenolpyruvate + H2O. It participates in carbohydrate degradation; glycolysis; pyruvate from D-glyceraldehyde 3-phosphate: step 4/5. Functionally, catalyzes the reversible conversion of 2-phosphoglycerate (2-PG) into phosphoenolpyruvate (PEP). It is essential for the degradation of carbohydrates via glycolysis. This Cereibacter sphaeroides (strain ATCC 17029 / ATH 2.4.9) (Rhodobacter sphaeroides) protein is Enolase.